Consider the following 290-residue polypeptide: 2-dehydro-3-deoxyphosphooctonate aldolase 1 (290 aa).

The residue at position 2 (Ala2) is an N-acetylalanine.

Belongs to the KdsA family. In terms of tissue distribution, expressed in shoots.

The protein localises to the cytoplasm. The enzyme catalyses D-arabinose 5-phosphate + phosphoenolpyruvate + H2O = 3-deoxy-alpha-D-manno-2-octulosonate-8-phosphate + phosphate. In terms of biological role, catalyzes the stereospecific condensation of D-arabinose 5-phosphate and phosphoenolpyruvate to form 3-deoxy-D-manno-octulosonate 8-phosphate (KDO-8-phosphate) and inorganic phosphate. Involved in the biosynthesis of 3-deoxy-D-manno-octulosonate (KDO) which is an indispensable component of rhamnogalacturonan II (RG-II), a structurally complex pectic polysaccharide of the primary cell wall. RG-II is essential for the cell wall integrity of rapidly growing tissues and pollen tube growth and elongation. This chain is 2-dehydro-3-deoxyphosphooctonate aldolase 1 (KDSA1), found in Arabidopsis thaliana (Mouse-ear cress).